The chain runs to 149 residues: D-aminoacyl-tRNA deacylase (149 aa).

Residues 137–138 (GP) carry the Gly-cisPro motif, important for rejection of L-amino acids motif.

This sequence belongs to the DTD family. In terms of assembly, homodimer.

The protein resides in the cytoplasm. It carries out the reaction glycyl-tRNA(Ala) + H2O = tRNA(Ala) + glycine + H(+). It catalyses the reaction a D-aminoacyl-tRNA + H2O = a tRNA + a D-alpha-amino acid + H(+). An aminoacyl-tRNA editing enzyme that deacylates mischarged D-aminoacyl-tRNAs. Also deacylates mischarged glycyl-tRNA(Ala), protecting cells against glycine mischarging by AlaRS. Acts via tRNA-based rather than protein-based catalysis; rejects L-amino acids rather than detecting D-amino acids in the active site. By recycling D-aminoacyl-tRNA to D-amino acids and free tRNA molecules, this enzyme counteracts the toxicity associated with the formation of D-aminoacyl-tRNA entities in vivo and helps enforce protein L-homochirality. This chain is D-aminoacyl-tRNA deacylase, found in Clostridium perfringens (strain ATCC 13124 / DSM 756 / JCM 1290 / NCIMB 6125 / NCTC 8237 / Type A).